Consider the following 158-residue polypeptide: Mitotic-spindle organizing protein 2B (158 aa).

S34 carries the post-translational modification Phosphoserine. Residues 84 to 158 form a disordered region; that stretch reads RLASEPQDPA…PGKSPTRGST (75 aa). Residues 111-122 are compositionally biased toward low complexity; it reads GSAALGGALALA. Residues 128-140 are compositionally biased toward polar residues; it reads EGSSQRMPRQPSA. S152 is subject to Phosphoserine.

Belongs to the MOZART2 family. In terms of assembly, associates with the gamma-tubulin ring complex (gTuRC) consisting of TUBGCP2, TUBGCP3, TUBGCP4, TUBGCP5 and TUBGCP6 and gamma-tubulin TUBG1 or TUBG2; within the complex, interacts with TUBGCP2; the interaction plays a role in gTuRC activation. Interacts with TUBG1.

It is found in the cytoplasm. Its subcellular location is the cytoskeleton. The protein resides in the microtubule organizing center. The protein localises to the centrosome. It localises to the spindle. Required for the recruitment and the assembly of the gamma-tubulin ring complex (gTuRC) at the centrosome. The gTuRC regulates the minus-end nucleation of alpha-beta tubulin heterodimers that grow into microtubule protafilaments, a critical step in centrosome duplication and spindle formation. This chain is Mitotic-spindle organizing protein 2B (MZT2B), found in Homo sapiens (Human).